The following is a 277-amino-acid chain: Carbonyl reductase [NADPH] 1 (277 aa).

S2 carries the N-acetylserine modification. Phosphoserine occurs at positions 2 and 30. NADP(+) is bound by residues 10–34 (VTGG…GDVV), 63–64 (DI), and N90. Residues 95 to 97 (FKV) and Q106 contribute to the glutathione site. S140 contacts substrate. Position 193-194 (193-194 (AY)) interacts with glutathione. Y194 acts as the Proton acceptor in catalysis. Residues 194-198 (YGVTK) and 231-233 (VRT) each bind NADP(+). K239 carries the post-translational modification N6-1-carboxyethyl lysine.

Belongs to the short-chain dehydrogenases/reductases (SDR) family. In terms of assembly, monomer.

Its subcellular location is the cytoplasm. The enzyme catalyses a secondary alcohol + NADP(+) = a ketone + NADPH + H(+). It catalyses the reaction prostaglandin F2alpha + NADP(+) = prostaglandin E2 + NADPH + H(+). It carries out the reaction prostaglandin E1 + NADP(+) = 15-oxoprostaglandin E1 + NADPH + H(+). The catalysed reaction is menadione + NADPH + H(+) = menadiol + NADP(+). The enzyme catalyses prostaglandin D2 + NADP(+) = 15-oxoprostaglandin D2 + NADPH + H(+). It catalyses the reaction prostaglandin E2 + NADP(+) = 15-oxoprostaglandin E2 + NADPH + H(+). It carries out the reaction prostaglandin F2alpha + NADP(+) = 15-oxoprostaglandin F2alpha + NADPH + H(+). The catalysed reaction is daunorubicin + NADPH + H(+) = 13-dihydrodaunorubicin + NADP(+). The enzyme catalyses S-nitrosoglutathione + NADPH + H(+) = S-(hydroxysulfenamide)glutathione + NADP(+). It catalyses the reaction a primary alcohol + NADP(+) = an aldehyde + NADPH + H(+). It carries out the reaction cortisol + NADPH + H(+) = 20beta-dihydrocortisol + NADP(+). The catalysed reaction is corticosterone + NADPH + H(+) = 20beta-dihydrocorticosterone + NADP(+). NADPH-dependent reductase with broad substrate specificity. Catalyzes the reduction of a wide variety of carbonyl compounds including quinones, prostaglandins, menadione, plus various xenobiotics. Catalyzes the reduction of the antitumor anthracyclines doxorubicin and daunorubicin to the cardiotoxic compounds doxorubicinol and daunorubicinol. Can convert prostaglandin E to prostaglandin F2-alpha. Can bind glutathione, which explains its higher affinity for glutathione-conjugated substrates. Catalyzes the reduction of S-nitrosoglutathione. In addition, participates in the glucocorticoid metabolism by catalyzing the NADPH-dependent cortisol/corticosterone into 20beta-dihydrocortisol (20b-DHF) or 20beta-corticosterone (20b-DHB), which are weak agonists of NR3C1 and NR3C2 in adipose tissue. This is Carbonyl reductase [NADPH] 1 from Pongo abelii (Sumatran orangutan).